A 186-amino-acid polypeptide reads, in one-letter code: Iodotyrosine deiodinase (186 aa).

Residues 11–15 (RKTVR), 38–39 (PS), and Ser39 each bind FMN. 3-iodo-L-tyrosine is bound by residues Met41, Glu68, Tyr72, and Lys92. L-tyrosine-binding residues include Met41, Glu68, Tyr72, and Lys92. Arg176 serves as a coordination point for FMN.

The protein belongs to the nitroreductase family. In terms of assembly, homodimer. It depends on FMN as a cofactor.

The enzyme catalyses 2 iodide + L-tyrosine + 2 NADP(+) = 3,5-diiodo-L-tyrosine + 2 NADPH + H(+). It catalyses the reaction iodide + L-tyrosine + NADP(+) = 3-iodo-L-tyrosine + NADPH. It carries out the reaction 3-iodo-L-tyrosine + iodide + NADP(+) = 3,5-diiodo-L-tyrosine + NADPH + H(+). The catalysed reaction is L-tyrosine + chloride + NADP(+) = 3-chloro-L-tyrosine + NADPH. The enzyme catalyses bromide + L-tyrosine + NADP(+) = 3-bromo-L-tyrosine + NADPH. Catalyzes the dehalogenation of halotyrosines such as 3-bromo-L-tyrosine, 3-chloro-L-tyrosine, 3-iodo-L-tyrosine and 3,5-diiodo-L-tyrosine. Activity towards 2-iodophenol is weak. The protein is Iodotyrosine deiodinase of Thermotoga neapolitana (strain ATCC 49049 / DSM 4359 / NBRC 107923 / NS-E).